A 65-amino-acid chain; its full sequence is MNGRLLEIVACPICQGRLKYDSENEQLICHFDHIAYPIKQGIPILLSDQAISLSTSLTNPEQQNQ.

The protein belongs to the UPF0434 family.

In Histophilus somni (strain 129Pt) (Haemophilus somnus), this protein is UPF0434 protein HS_0657.